The sequence spans 344 residues: MTVILAIESSCDETGVGIAELTPDGSVVLLADEVASSVEEHARFGGVVPEIASRAHLEALGVTARRALDLAGVQRPDVVAATIGPGLAGALLVGVSAAKGLALAWGVPFYGVNHLGGHIAADVYENGPLPECVALLVSGGHTSLLHVRSLAEPIEELGATVDDAAGEAYDKVARLLGLGYPGGKVLDELAQQGDSSAVPFPRGMTGPRDARHSFSFSGLKTAVARYLEKHGVEADFSPADVAAGFQEAVADVLTMKAVRAATDLGVSTLLIAGGVAANSRVRALAEQRCAETGLTLRVPPLRLCTDNGAMIASFAAHLVAAGAQPSSLQAAADPGLPVVKGQVH.

Fe cation is bound by residues His-114 and His-118. Substrate is bound by residues 136–140 (LVSGG), Asp-170, Gly-183, Asp-187, and Asn-278. Asp-306 serves as a coordination point for Fe cation.

This sequence belongs to the KAE1 / TsaD family. Requires Fe(2+) as cofactor.

It is found in the cytoplasm. The catalysed reaction is L-threonylcarbamoyladenylate + adenosine(37) in tRNA = N(6)-L-threonylcarbamoyladenosine(37) in tRNA + AMP + H(+). Its function is as follows. Required for the formation of a threonylcarbamoyl group on adenosine at position 37 (t(6)A37) in tRNAs that read codons beginning with adenine. Is involved in the transfer of the threonylcarbamoyl moiety of threonylcarbamoyl-AMP (TC-AMP) to the N6 group of A37, together with TsaE and TsaB. TsaD likely plays a direct catalytic role in this reaction. This is tRNA N6-adenosine threonylcarbamoyltransferase from Mycobacteroides abscessus (strain ATCC 19977 / DSM 44196 / CCUG 20993 / CIP 104536 / JCM 13569 / NCTC 13031 / TMC 1543 / L948) (Mycobacterium abscessus).